A 186-amino-acid chain; its full sequence is Peptide deformylase (186 aa).

Residues C113 and H157 each coordinate Fe cation. E158 is an active-site residue. H161 contacts Fe cation.

Belongs to the polypeptide deformylase family. Requires Fe(2+) as cofactor.

The catalysed reaction is N-terminal N-formyl-L-methionyl-[peptide] + H2O = N-terminal L-methionyl-[peptide] + formate. Functionally, removes the formyl group from the N-terminal Met of newly synthesized proteins. Requires at least a dipeptide for an efficient rate of reaction. N-terminal L-methionine is a prerequisite for activity but the enzyme has broad specificity at other positions. This Malacoplasma penetrans (strain HF-2) (Mycoplasma penetrans) protein is Peptide deformylase.